The chain runs to 660 residues: Sodium/nucleoside cotransporter 2 (660 aa).

Ser46 bears the Phosphoserine mark. 14 helical membrane passes run 82–102 (ILLG…CILN), 106–125 (ALAL…CHFL), 150–168 (KRVF…LALD), 174–194 (EQLI…ACSK), 202–222 (RTVF…IRTE), 235–255 (IQIF…DTLV), 262–282 (QSLP…YLGL), 297–316 (TMGT…FVGM), 338–357 (VMTG…FISF), 364–383 (LISA…KLVY), 425–445 (VAAN…TLSW), 456–476 (SFQV…GVQW), 531–551 (TTFS…LGGL), and 569–589 (ALFT…ILYV).

The protein belongs to the concentrative nucleoside transporter (CNT) (TC 2.A.41) family.

Its subcellular location is the membrane. It localises to the apicolateral cell membrane. The catalysed reaction is adenosine(out) + Na(+)(out) = adenosine(in) + Na(+)(in). It carries out the reaction inosine(out) + Na(+)(out) = inosine(in) + Na(+)(in). It catalyses the reaction guanosine(out) + Na(+)(out) = guanosine(in) + Na(+)(in). The enzyme catalyses uridine(out) + Na(+)(out) = uridine(in) + Na(+)(in). In terms of biological role, sodium-dependent and purine-selective transporter. Exhibits the transport characteristics of the nucleoside transport system cif or N1 subtype (N1/cif) (selective for purine nucleosides and uridine). Plays a critical role in specific uptake and salvage of purine nucleosides in kidney and other tissues. May contribute to regulate the transport of organic compounds in testes across the blood-testis-barrier. The sequence is that of Sodium/nucleoside cotransporter 2 (Slc28a2) from Mus musculus (Mouse).